Reading from the N-terminus, the 384-residue chain is Substance-K receptor (384 aa).

Residues 1 to 32 (MGAHASVTDTNILSGLESNATGVTAFSMPGWQ) are Extracellular-facing. N-linked (GlcNAc...) asparagine glycosylation occurs at asparagine 19. Residues 33–56 (LALWATAYLALVLVAVTGNATVIW) traverse the membrane as a helical segment. Residues 57-69 (IILAHERMRTVTN) are Cytoplasmic-facing. A helical membrane pass occupies residues 70 to 90 (YFIINLALADLCMAAFNATFN). Residues 91 to 107 (FIYASHNIWYFGSTFCY) are Extracellular-facing. Residues cysteine 106 and cysteine 181 are joined by a disulfide bond. Residues 108 to 129 (FQNLFPVTAMFVSIYSMTAIAA) form a helical membrane-spanning segment. At 130-149 (DRYMAIVHPFQPRLSAPSTK) the chain is on the cytoplasmic side. Residues 150-170 (AVIAVIWLVALALASPQCFYS) traverse the membrane as a helical segment. At 171–196 (TITVDQGATKCVVAWPNDNGGKMLLL) the chain is on the extracellular side. A helical membrane pass occupies residues 197 to 218 (YHLVVFVLIYFLPLVVMFAAYS). Residues 219-251 (VIGLTLWKRAVPRHQAHGANLRHLQAKKKFVKA) lie on the Cytoplasmic side of the membrane. Residues 252–272 (MVLVVVTFAICWLPYHLYFIL) traverse the membrane as a helical segment. The Extracellular segment spans residues 273–290 (GTFQEDIYYRKFIQQVYL). A helical transmembrane segment spans residues 291-310 (ALFWLAMSSTMYNPIIYCCL). Residues 311 to 384 (NHRFRSGFRL…GPQDGEPAGP (74 aa)) are Cytoplasmic-facing. The S-palmitoyl cysteine moiety is linked to residue cysteine 324. Residues 365 to 384 (HSEATNGQVGGPQDGEPAGP) form a disordered region.

It belongs to the G-protein coupled receptor 1 family.

It localises to the cell membrane. Functionally, this is a receptor for the tachykinin neuropeptide substance K (neurokinin A). It is associated with G proteins that activate a phosphatidylinositol-calcium second messenger system. The rank order of affinity of this receptor to tachykinins is: substance K &gt; neuromedin-K &gt; substance P. The polypeptide is Substance-K receptor (Tacr2) (Mus musculus (Mouse)).